The following is a 189-amino-acid chain: Putative 3-methyladenine DNA glycosylase (189 aa).

Belongs to the DNA glycosylase MPG family.

This chain is Putative 3-methyladenine DNA glycosylase (mag), found in Corynebacterium glutamicum (strain ATCC 13032 / DSM 20300 / JCM 1318 / BCRC 11384 / CCUG 27702 / LMG 3730 / NBRC 12168 / NCIMB 10025 / NRRL B-2784 / 534).